The chain runs to 1392 residues: Ankyrin repeat domain-containing protein 30B (1392 aa).

The interval 1–21 (MKRLLAAAGKGVRGPEPPNPF) is disordered. ANK repeat units follow at residues 72–101 (KKRT…QLNV), 105–134 (EGRT…DLNY), 138–167 (YGNT…VIEV), 171–200 (ASLT…NANA), and 204–233 (SKCT…DVFA). 6 disordered regions span residues 265-292 (PKNP…ERTP), 558-587 (AQMF…VSQK), 636-656 (DRET…PTCG), 671-690 (RETL…PTCG), 830-877 (KEGA…SDSE), and 904-926 (GKIE…QNSV). Polar residues-rich tracts occupy residues 267 to 280 (NPQN…STGT) and 576 to 586 (DSESPCETVSQ). Positions 636 to 650 (DRETFKAESPDKDGL) are enriched in basic and acidic residues. Over residues 830–840 (KEGATKTVTGQ) the composition is skewed to polar residues. 2 stretches are compositionally biased toward basic and acidic residues: residues 864–874 (LGRKEDTKSTS) and 904–915 (GKIEESPEKPSH). Coiled coils occupy residues 960 to 1168 (RELK…KQDK) and 1270 to 1318 (ETQC…QQLV).

Expressed in brain, breast and testis.

This is Ankyrin repeat domain-containing protein 30B (ANKRD30B) from Homo sapiens (Human).